Reading from the N-terminus, the 394-residue chain is Probable sugar efflux transporter (394 aa).

12 helical membrane passes run 15 to 35 (VLML…PVGL), 50 to 70 (VGLM…PMML), 79 to 99 (MLLM…SVAW), 109 to 129 (IGIA…AIRV), 137 to 157 (QALS…LPIG), 168 to 188 (ITFA…LKLL), 209 to 229 (PALV…YTAY), 249 to 269 (FLLL…SIYG), 272 to 292 (FPAT…MCLY), 299 to 319 (LAVS…GLAV), 333 to 353 (VAMS…ALLG), and 362 to 382 (MASV…WCAW).

Belongs to the major facilitator superfamily. SotB (TC 2.A.1.2) family.

Its subcellular location is the cell inner membrane. Functionally, involved in the efflux of sugars. The physiological role may be the reduction of the intracellular concentration of toxic sugars or sugar metabolites. The sequence is that of Probable sugar efflux transporter from Erwinia tasmaniensis (strain DSM 17950 / CFBP 7177 / CIP 109463 / NCPPB 4357 / Et1/99).